Consider the following 281-residue polypeptide: Diaminopimelate epimerase (281 aa).

Residues asparagine 13, glutamine 46, and asparagine 66 each contribute to the substrate site. Cysteine 75 serves as the catalytic Proton donor. Substrate contacts are provided by residues 76–77 (GN), asparagine 160, asparagine 193, and 211–212 (ER). Cysteine 220 (proton acceptor) is an active-site residue. A substrate-binding site is contributed by 221-222 (GT).

This sequence belongs to the diaminopimelate epimerase family. Homodimer.

It localises to the cytoplasm. It catalyses the reaction (2S,6S)-2,6-diaminopimelate = meso-2,6-diaminopimelate. Its pathway is amino-acid biosynthesis; L-lysine biosynthesis via DAP pathway; DL-2,6-diaminopimelate from LL-2,6-diaminopimelate: step 1/1. Catalyzes the stereoinversion of LL-2,6-diaminopimelate (L,L-DAP) to meso-diaminopimelate (meso-DAP), a precursor of L-lysine and an essential component of the bacterial peptidoglycan. In Acinetobacter baylyi (strain ATCC 33305 / BD413 / ADP1), this protein is Diaminopimelate epimerase.